The following is a 290-amino-acid chain: Metallo-beta-lactamase L1 type 3 (290 aa).

Residues 1–21 (MRSTLLAFALAVALPAAHTSA) form the signal peptide. Positions 22–33 (AEVPLPQLRAYT) are excised as a propeptide. Positions 105, 107, 109, 110, and 181 each coordinate Zn(2+). Asp205 serves as a coordination point for substrate. Cys239 and Cys267 form a disulfide bridge. His246 provides a ligand contact to Zn(2+).

The protein belongs to the metallo-beta-lactamase superfamily. Class-B beta-lactamase family. Homotetramer. Zn(2+) is required as a cofactor.

It is found in the periplasm. It catalyses the reaction a beta-lactam + H2O = a substituted beta-amino acid. With respect to regulation, inhibited by Hg(2+) or Cu(2+), and by chelating agents such as EDTA and O-phenanthroline. Reduced enzymatic activity in presence of cobalt, nickel, cadmium, and manganese. Confers resistance to the different beta-lactams antibiotics (penicillin, cephalosporin and carbapenem) via the hydrolysis of the beta-lactam ring. This Stenotrophomonas maltophilia (Pseudomonas maltophilia) protein is Metallo-beta-lactamase L1 type 3.